Reading from the N-terminus, the 479-residue chain is Integrator complex subunit 12 (479 aa).

Residues 57 to 140 (SKVSLPKMTK…SPIAFQTKDI (84 aa)) form a disordered region. Positions 70–90 (KSSSSSSASSSITTTSSSKSS) are enriched in low complexity. A compositionally biased stretch (basic and acidic residues) spans 91-128 (TSEKSKKESEKRTLEKIRVDPGEGVEPPKKPRLEKQDS). The PHD-type zinc-finger motif lies at 161–217 (GLACVVCRQMTVTSGNQLVECQECHNLYHQECHKPQVTDKDVNDPRLVWYCARCTRQ). Disordered regions lie at residues 221-241 (MAQK…TTVP), 274-293 (TAAS…LPPG), and 305-479 (SNVG…KLKK). Low complexity-rich tracts occupy residues 223-239 (QKTQ…LATT) and 280-289 (SSSSSSSSSS). Over residues 305 to 328 (SNVGPSSTKLSTSQSGNSKTSPAA) the composition is skewed to polar residues. Positions 354–364 (SSAGSGNGNNG) are enriched in gly residues. A compositionally biased stretch (low complexity) spans 399-411 (GSLSPGAAPSSSL). Residues 412–428 (GGNGGSGGNGAGNGGNS) are compositionally biased toward gly residues. The span at 429–451 (AGSSSSSGNNNNNGAKASADGKA) shows a compositional bias: low complexity. A compositionally biased stretch (basic residues) spans 466–479 (QMVKKKAAQKKLKK).

Belongs to the Integrator subunit 12 family. In terms of assembly, component of the Integrator complex, composed of core subunits INTS1, INTS2, INTS3, INTS4, INTS5, INTS6, INTS7, INTS8, INTS9/RC74, INTS10, INTS11/CPSF3L, INTS12, INTS13, INTS14 and INTS15. The core complex associates with protein phosphatase 2A subunits PPP2CA and PPP2R1A, to form the Integrator-PP2A (INTAC) complex.

Its subcellular location is the nucleus. Its function is as follows. Component of the integrator complex, a multiprotein complex that terminates RNA polymerase II (Pol II) transcription in the promoter-proximal region of genes. The integrator complex provides a quality checkpoint during transcription elongation by driving premature transcription termination of transcripts that are unfavorably configured for transcriptional elongation: the complex terminates transcription by (1) catalyzing dephosphorylation of the C-terminal domain (CTD) of Pol II subunit POLR2A/RPB1 and SUPT5H/SPT5, (2) degrading the exiting nascent RNA transcript via endonuclease activity and (3) promoting the release of Pol II from bound DNA. The integrator complex is also involved in terminating the synthesis of non-coding Pol II transcripts, such as enhancer RNAs (eRNAs), small nuclear RNAs (snRNAs), telomerase RNAs and long non-coding RNAs (lncRNAs). This chain is Integrator complex subunit 12 (ints12), found in Danio rerio (Zebrafish).